The chain runs to 511 residues: Phosphoenolpyruvate carboxylase (511 aa).

The protein belongs to the PEPCase type 2 family. In terms of assembly, homotetramer. Requires Mg(2+) as cofactor.

It carries out the reaction oxaloacetate + phosphate = phosphoenolpyruvate + hydrogencarbonate. Functionally, catalyzes the irreversible beta-carboxylation of phosphoenolpyruvate (PEP) to form oxaloacetate (OAA), a four-carbon dicarboxylic acid source for the tricarboxylic acid cycle. This is Phosphoenolpyruvate carboxylase from Saccharolobus islandicus (strain Y.G.57.14 / Yellowstone #1) (Sulfolobus islandicus).